The chain runs to 258 residues: 5-oxoprolinase subunit A (258 aa).

Belongs to the LamB/PxpA family. In terms of assembly, forms a complex composed of PxpA, PxpB and PxpC.

The enzyme catalyses 5-oxo-L-proline + ATP + 2 H2O = L-glutamate + ADP + phosphate + H(+). Functionally, catalyzes the cleavage of 5-oxoproline to form L-glutamate coupled to the hydrolysis of ATP to ADP and inorganic phosphate. The chain is 5-oxoprolinase subunit A from Corynebacterium jeikeium (strain K411).